Consider the following 403-residue polypeptide: Cytochrome P450-SU2 (403 aa).

The segment at 1-24 (MTTAERTAPPDALTVPASRAPGCP) is disordered. Cys-352 contributes to the heme binding site.

Belongs to the cytochrome P450 family. Heme is required as a cofactor.

Its function is as follows. Metabolism of a number of sulfonylurea herbicides. This chain is Cytochrome P450-SU2 (cyp105B1), found in Streptomyces griseolus.